We begin with the raw amino-acid sequence, 513 residues long: Glutamyl-tRNA(Gln) amidotransferase subunit A (513 aa).

Active-site charge relay system residues include Lys85 and Ser160. The active-site Acyl-ester intermediate is Ser184.

This sequence belongs to the amidase family. GatA subfamily. In terms of assembly, heterotrimer of A, B and C subunits.

It carries out the reaction L-glutamyl-tRNA(Gln) + L-glutamine + ATP + H2O = L-glutaminyl-tRNA(Gln) + L-glutamate + ADP + phosphate + H(+). Its function is as follows. Allows the formation of correctly charged Gln-tRNA(Gln) through the transamidation of misacylated Glu-tRNA(Gln) in organisms which lack glutaminyl-tRNA synthetase. The reaction takes place in the presence of glutamine and ATP through an activated gamma-phospho-Glu-tRNA(Gln). This is Glutamyl-tRNA(Gln) amidotransferase subunit A from Bifidobacterium longum (strain NCC 2705).